A 418-amino-acid chain; its full sequence is ADP-ribose glycohydrolase MACROD2 (418 aa).

The 182-residue stretch at 57-238 (PEEIQVKNSL…IYKRKLNEFF (182 aa)) folds into the Macro domain. Substrate contacts are provided by residues 75-77 (GDI), 88-90 (AAN), 95-100 (GGGGVD), 183-189 (ISTGIYG), and phenylalanine 222. The interval 238-418 (FPKDGGDDEE…KDTNDDANEA (181 aa)) is disordered. Residues 250–262 (KGDSDEMKEDTEG) show a composition bias toward basic and acidic residues. Residues 295–318 (TGNTQDMTAMSLETNEGNDVSSPA) show a composition bias toward polar residues. Residues 321–360 (PLKEGEELSEAKITGEKISVEPKTPEPEDAKMTVEEKSQE) are compositionally biased toward basic and acidic residues. Residues 377 to 389 (ETEDLDGDSEEPS) show a composition bias toward acidic residues.

This sequence belongs to the MacroD-type family. MacroD1/2-like subfamily.

The protein resides in the nucleus. The catalysed reaction is 2''-O-acetyl-ADP-D-ribose + H2O = ADP-D-ribose + acetate + H(+). It carries out the reaction 4-O-(ADP-D-ribosyl)-L-aspartyl-[protein] + H2O = L-aspartyl-[protein] + ADP-D-ribose + H(+). It catalyses the reaction 5-O-(ADP-D-ribosyl)-L-glutamyl-[protein] + H2O = L-glutamyl-[protein] + ADP-D-ribose + H(+). The enzyme catalyses alpha-NAD(+) + H2O = ADP-D-ribose + nicotinamide + H(+). With respect to regulation, subject to product inhibition by ADP-ribose. Removes ADP-ribose from aspartate and glutamate residues in proteins bearing a single ADP-ribose moiety. Inactive towards proteins bearing poly-ADP-ribose. Deacetylates O-acetyl-ADP ribose, a signaling molecule generated by the deacetylation of acetylated lysine residues in histones and other proteins. This is ADP-ribose glycohydrolase MACROD2 from Xenopus laevis (African clawed frog).